A 173-amino-acid chain; its full sequence is MYVSMLFGFSYVFWLIGVSSNISVYYGVVSLVCTAGTGCVVLAWKGGSFLALVLFLIYLGGMLVIFAYSITLVMEPFPEVMGDWVGVMHAGKYVVLAVVFVLVGWGWWGVGECGDGVVDAGGLSIVRVDSSGLSLLYAIGGGALMMAMFGLFLTFFIVLVLVQGLFRVACPTI.

4 consecutive transmembrane segments (helical) span residues 12 to 32, 47 to 67, 94 to 114, and 142 to 162; these read VFWLIGVSSNISVYYGVVSLV, GSFLALVLFLIYLGGMLVIFA, VVLAVVFVLVGWGWWGVGECG, and GALMMAMFGLFLTFFIVLVLV.

The protein belongs to the complex I subunit 6 family.

It is found in the mitochondrion membrane. It carries out the reaction a ubiquinone + NADH + 5 H(+)(in) = a ubiquinol + NAD(+) + 4 H(+)(out). Core subunit of the mitochondrial membrane respiratory chain NADH dehydrogenase (Complex I) that is believed to belong to the minimal assembly required for catalysis. Complex I functions in the transfer of electrons from NADH to the respiratory chain. The immediate electron acceptor for the enzyme is believed to be ubiquinone. This is NADH-ubiquinone oxidoreductase chain 6 (MT-ND6) from Pelomedusa subrufa (African side-necked turtle).